A 1984-amino-acid polypeptide reads, in one-letter code: Sodium channel protein type 9 subunit alpha (1984 aa).

Residues 1–125 (MAMLPPPGPQ…RRISIKILVH (125 aa)) are Cytoplasmic-facing. A compositionally biased stretch (basic and acidic residues) spans 26 to 47 (RIAEGKTKEPKEEKKDDHDEGP). The tract at residues 26 to 55 (RIAEGKTKEPKEEKKDDHDEGPKPSSDLEA) is disordered. The I repeat unit spans residues 112–408 (FSPLRRISIK…VAMAYEEQNQ (297 aa)). Residues 126–145 (SLFSMLIMCTILTNCIFMTM) traverse the membrane as a helical segment. The Extracellular segment spans residues 146–150 (NNPAE). The helical transmembrane segment at 151 to 172 (WTKNVEYTFTGIYTFESLVKIF) threads the bilayer. Residues 173 to 185 (ARGFCVGEFTFLR) are Cytoplasmic-facing. Residues 186–204 (DPWNWLDFIVIVFAYLTEF) traverse the membrane as a helical segment. Residues 205-210 (VNLGNV) are Extracellular-facing. A glycan (N-linked (GlcNAc...) asparagine) is linked at Asn-209. Residues 211 to 227 (SALRTFRVLRALKTISV) form a helical membrane-spanning segment. Topologically, residues 228–241 (IPGLKTIVGALIQS) are cytoplasmic. Residues 242–267 (VKKLSDVIILTVFCLSVFALIGLQLF) traverse the membrane as a helical segment. The Extracellular segment spans residues 268–344 (MGHLKHKCLR…PDYGYTSFDT (77 aa)). The cysteines at positions 275 and 322 are disulfide-linked. A glycan (N-linked (GlcNAc...) asparagine) is linked at Asn-281. Residues 345-361 (FSWAFLALFRLMTQDYW) constitute an intramembrane region (pore-forming). The Extracellular portion of the chain corresponds to 362-374 (ENLYQQTLRAAGK). A helical transmembrane segment spans residues 375–400 (TYMIFFVVVIFLGSFYLINLILAVVA). Residues 401–742 (MAYEEQNQAN…FIYIIVMDPF (342 aa)) lie on the Cytoplasmic side of the membrane. Low complexity predominate over residues 459–469 (SSSETSKLSSK). 2 disordered regions span residues 459–517 (SSSE…LGVE) and 563–610 (GSET…PPML). A compositionally biased stretch (basic residues) spans 472–484 (KERRNRRKKKNQK). Composition is skewed to basic and acidic residues over residues 487–508 (SSGE…ESIS) and 571–583 (DEHS…ESRR). The II repeat unit spans residues 723 to 986 (CSPFWIKFKK…EEDTDANNLQ (264 aa)). The chain crosses the membrane as a helical span at residues 743–759 (VDLAITICIVLNTLFMA). The Extracellular segment spans residues 760–768 (MEHHPMTEE). The chain crosses the membrane as a helical span at residues 769 to 793 (FKNVLVVGNLVFTGIFAAEMVLKLI). Residues 794-802 (AMDPYEYFQ) are Cytoplasmic-facing. The helical transmembrane segment at 803–819 (VGWNVFDSLIVTLSLVE) threads the bilayer. At 820–828 (LFLADVEGL) the chain is on the extracellular side. A helical membrane pass occupies residues 829 to 845 (SVLRSFRLLRVFKLAKS). At 846-862 (WPTLNMLIKIIGNSVGP) the chain is on the cytoplasmic side. A helical membrane pass occupies residues 863–885 (LGNLTLVLAIIVFIFAVVGMQLF). At 886–912 (GKSYKECVCKINDDCSLPRWHMNDFFH) the chain is on the extracellular side. Residues Cys-894 and Cys-900 are joined by a disulfide bond. An intramembrane region (pore-forming) is located at residues 913 to 925 (SFLIVFRVLCGEW). The Extracellular segment spans residues 926 to 937 (IETMWDCMEVAG). A disulfide bond links Cys-932 and Cys-941. A helical transmembrane segment spans residues 938–964 (QAMCLIVYMMVMVIGNLVVLNLFLALL). The Cytoplasmic segment spans residues 965–1184 (LSSFSSDNLS…WWNIRKTCYR (220 aa)). The interval 1087–1146 (PIAPGESDLENMNTEELSSDSESEYSKERLNRSSSSECSTVDNALPGEGEEAEAEPVNSD) is disordered. Residues 1118–1128 (RSSSSECSTVD) are compositionally biased toward polar residues. Positions 1134 to 1146 (EGEEAEAEPVNSD) are enriched in acidic residues. An III repeat occupies 1177 to 1485 (NIRKTCYRIV…KKYYNAMKKL (309 aa)). Residues 1185–1209 (IVEHSWFESFIVLMILLSSGALAFE) form a helical membrane-spanning segment. Over 1210–1221 (DIYIEKKKTIKI) the chain is Extracellular. A helical membrane pass occupies residues 1222–1247 (ILEYADKIFTYIFILEMLLKWVAYGY). The Cytoplasmic segment spans residues 1248–1249 (KT). A helical transmembrane segment spans residues 1250 to 1275 (YFTNAWCWLDFLIVDVSLVTLVANTL). Residues 1276–1284 (GYSDLGPIK) lie on the Extracellular side of the membrane. Residues 1285–1301 (SLRTLRALRPLRALSRF) form a helical membrane-spanning segment. The Cytoplasmic portion of the chain corresponds to 1302 to 1314 (EGMRVVVNALIGA). The helical transmembrane segment at 1315 to 1339 (IPSIMNVLLVCLIFWLIFSIMGVNL) threads the bilayer. Residues 1340 to 1391 (FAGKFYQCVNTTDDSRFPTKQVSNRSECFALMNGSQNVRWKNLKVNFDNVGL) lie on the Extracellular side of the membrane. Cys-1347 and Cys-1367 are oxidised to a cystine. N-linked (GlcNAc...) asparagine glycosylation is found at Asn-1349, Asn-1363, and Asn-1372. Positions 1392 to 1402 (RYLSLLQVATF) form an intramembrane region, pore-forming. At 1403 to 1428 (KGWMDIMYAAVDSVNVDQQPSYEHNL) the chain is on the extracellular side. The helical transmembrane segment at 1429–1454 (YMYIYFVIFIIFGSFFTLNLFIGVII) threads the bilayer. Topologically, residues 1455 to 1511 (DNFNQQKKKLGGQDIFMTEEQKKYYNAMKKLGSKKPQKPIPRPGNKFQGCIFDLVTN) are cytoplasmic. Ser-1487 carries the post-translational modification Phosphoserine; by PKC. One copy of the IV repeat lies at 1494–1792 (IPRPGNKFQG…WEKFDPDATQ (299 aa)). A helical membrane pass occupies residues 1512-1531 (QAFDITIMILICLNMVTMMV). Residues 1532-1542 (EKEGQSDYMTD) lie on the Extracellular side of the membrane. The chain crosses the membrane as a helical span at residues 1543-1564 (VLYWINVVFIILFTGECVLKLI). At 1565–1573 (SLRHYYFTI) the chain is on the cytoplasmic side. The chain crosses the membrane as a helical span at residues 1574–1595 (GWNIFDFVVVILSIVGMFLAEL). Over 1596–1604 (IETYFVSPT) the chain is Extracellular. A helical transmembrane segment spans residues 1605-1624 (LFRVIRLARIGRILRLIKGA). Residues 1625–1637 (KGIRTLLFALMMS) are Cytoplasmic-facing. Residues 1638-1660 (LPALFNIGLLLFLVMFIYAIFGM) traverse the membrane as a helical segment. The Extracellular portion of the chain corresponds to 1661 to 1683 (SNFAYVKKEAGINDMFNFETFGN). The segment at residues 1684–1696 (SMICLFQITTSAG) is an intramembrane region (pore-forming). Over 1697-1730 (WDGLLAPILNSAPPDCDPKKVHPGSSTEGDCGSP) the chain is Extracellular. Cysteines 1712 and 1727 form a disulfide. A helical membrane pass occupies residues 1731–1756 (SVGIFYFVSYIIISFLVVVNMYIAVI). Topologically, residues 1757 to 1984 (LENFSVATEE…KGKDGKETKK (228 aa)) are cytoplasmic. The IQ domain maps to 1886-1915 (EDVSATVIQRAYRRYRLRQNVKNISSIYIK). Positions 1924–1984 (PNKGDIVFDN…KGKDGKETKK (61 aa)) are disordered. Residues 1933–1956 (NVNSSSPEKTDATASTISPPSYDS) show a composition bias toward polar residues. Residues 1958-1984 (TKPDKEKYEKDKTEKEDKGKDGKETKK) are compositionally biased toward basic and acidic residues.

This sequence belongs to the sodium channel (TC 1.A.1.10) family. Nav1.7/SCN9A subfamily. In terms of assembly, the Nav1.7 voltage-gated sodium channel consists of an ion-conducting alpha subunit SCN9A which is functional on its own regulated by one or more beta-1 (SCN1B), beta-2 (SCN2B), beta-3 (SCN3B) and beta-4 (SCN4B) subunits. SCN1B and SCN3B are non-covalently associated with SCN9A. SCN2B and SCN4B are disulfide-linked to SCN9A. SCN1B regulates channel inactivation. Interacts with NEDD4 and NEDD4L; regulates Nav1.7 activity most probably through ubiquitination and subsequent endocytosis. Interacts with TMEM233; modulates the gating properties of NaV1.7. In terms of processing, phosphorylation at Ser-1487 by PKC in a highly conserved cytoplasmic loop increases peak sodium currents. Ubiquitinated by NEDD4L; which may promote its endocytosis. In terms of tissue distribution, expressed in the sciatic nerve, spinal cord, brainstem, cerebellum and cortex, but not expressed in the lung, skeletal and cardiac muscles, kidney and liver.

The protein localises to the cell membrane. Its subcellular location is the cell projection. The protein resides in the neuron projection. It is found in the axon. The enzyme catalyses Na(+)(in) = Na(+)(out). Pore-forming subunit of Nav1.7, a voltage-gated sodium (Nav) channel that directly mediates the depolarizing phase of action potentials in excitable membranes. Navs, also called VGSCs (voltage-gated sodium channels) or VDSCs (voltage-dependent sodium channels), operate by switching between closed and open conformations depending on the voltage difference across the membrane. In the open conformation they allow Na(+) ions to selectively pass through the pore, along their electrochemical gradient. The influx of Na(+) ions provokes membrane depolarization, initiating the propagation of electrical signals throughout cells and tissues. Nav1.7 plays a crucial role in controlling the excitability and action potential propagation from nociceptor neurons, thereby contributing to the sensory perception of pain. This Oryctolagus cuniculus (Rabbit) protein is Sodium channel protein type 9 subunit alpha.